A 775-amino-acid chain; its full sequence is Phenylalanine--tRNA ligase beta subunit (775 aa).

The 109-residue stretch at 39 to 147 folds into the tRNA-binding domain; that stretch reads GIDLDGVVFG…EDFKPGTDAN (109 aa). The B5 domain occupies 394 to 470; sequence YKPKKVFLPQ…RVKGYEHYTS (77 aa). D448, D454, E457, and E458 together coordinate Mg(2+). An FDX-ACB domain is found at 681-774; it reads AKFPPVVRDI…LKEKYGVELR (94 aa).

The protein belongs to the phenylalanyl-tRNA synthetase beta subunit family. Type 1 subfamily. In terms of assembly, tetramer of two alpha and two beta subunits. Mg(2+) serves as cofactor.

Its subcellular location is the cytoplasm. It carries out the reaction tRNA(Phe) + L-phenylalanine + ATP = L-phenylalanyl-tRNA(Phe) + AMP + diphosphate + H(+). The protein is Phenylalanine--tRNA ligase beta subunit (pheT) of Aquifex aeolicus (strain VF5).